The sequence spans 868 residues: Pentatricopeptide repeat-containing protein At2g27610 (868 aa).

PPR repeat units follow at residues 57-91 (DRES…GMEM), 92-126 (DCSI…GFLD), 127-157 (DVSV…MKER), 158-192 (NVVT…GTQP), 193-227 (NSFT…GLDK), 228-258 (TIPV…TEVK), 259-293 (SVVT…YVRL), 294-328 (SESS…GFLF), 329-359 (DQNI…IGCV), 361-395 (NVVS…GVRP), 396-426 (NEFT…NYER), 427-457 (SSTV…IDDK), 458-492 (DIVA…GIKP), 493-528 (NEFT…RLDS), 529-559 (SLCV…QREK), 560-594 (DLVS…KVKM), 595-625 (DGVT…MVRD), and 631-661 (TKEH…MPNP). Positions 666–741 (IWRTILAACR…EPGYSWIEVK (76 aa)) are type E motif. A type E(+) motif region spans residues 742–772 (NKTYSFLAGDRSHPLKDQIYMKLEDLSTRLK). A type DYW motif region spans residues 773–868 (DLGYEPDTSY…DGVCSCGDFW (96 aa)).

It belongs to the PPR family. PCMP-H subfamily.

The protein is Pentatricopeptide repeat-containing protein At2g27610 (PCMP-H60) of Arabidopsis thaliana (Mouse-ear cress).